The following is a 345-amino-acid chain: Flotillin-like protein FloA 1 (345 aa).

Residues 26 to 46 (LLLLVGVFLALFFAAVLGFFF) traverse the membrane as a helical segment.

Belongs to the flotillin-like FloA family. As to quaternary structure, homooligomerizes.

It localises to the cell membrane. It is found in the membrane raft. In terms of biological role, found in functional membrane microdomains (FMM) that may be equivalent to eukaryotic membrane rafts. FMMs are highly dynamic and increase in number as cells age. Flotillins are thought to be important factors in membrane fluidity. The chain is Flotillin-like protein FloA 1 from Rhodopirellula baltica (strain DSM 10527 / NCIMB 13988 / SH1).